Here is a 93-residue protein sequence, read N- to C-terminus: Small ribosomal subunit protein uS19 (93 aa).

It belongs to the universal ribosomal protein uS19 family.

Functionally, protein S19 forms a complex with S13 that binds strongly to the 16S ribosomal RNA. The protein is Small ribosomal subunit protein uS19 of Renibacterium salmoninarum (strain ATCC 33209 / DSM 20767 / JCM 11484 / NBRC 15589 / NCIMB 2235).